The sequence spans 158 residues: uncharacterized protein (158 aa).

The next 4 helical transmembrane spans lie at Phe-42–Tyr-62, Trp-71–Ala-91, Leu-102–Leu-122, and Glu-130–Phe-150.

It localises to the cell membrane. This is an uncharacterized protein from Bacillus subtilis (strain 168).